The sequence spans 449 residues: uncharacterized protein (449 aa).

Disordered regions lie at residues Met1–Ser58 and Glu71–Leu125. Residues Lys30–Ser46 show a composition bias toward basic and acidic residues. The segment covering Ser103 to Glu124 has biased composition (acidic residues).

It belongs to the bystin family.

This is an uncharacterized protein from Caenorhabditis elegans.